An 83-amino-acid chain; its full sequence is U2-hexatoxin-Hi1a (83 aa).

A signal peptide spans 1-23; the sequence is MRNTTFLVLNVMLLVSVALFCAA. Positions 24–45 are excised as a propeptide; the sequence is DPEMEKSSFAEILDTGNPEQER. Cystine bridges form between C47–C63, C54–C68, C62–C78, and C70–C76.

This sequence belongs to the neurotoxin 07 (Beta/delta-agtx) family. Expressed by the venom gland.

The protein resides in the secreted. In terms of biological role, inhibits sodium channels (Nav) of insects. This is U2-hexatoxin-Hi1a from Hadronyche infensa (Fraser island funnel-web spider).